The chain runs to 208 residues: Large ribosomal subunit protein uL3 (208 aa).

Gln149 carries the post-translational modification N5-methylglutamine.

The protein belongs to the universal ribosomal protein uL3 family. In terms of assembly, part of the 50S ribosomal subunit. Forms a cluster with proteins L14 and L19. Methylated by PrmB.

Its function is as follows. One of the primary rRNA binding proteins, it binds directly near the 3'-end of the 23S rRNA, where it nucleates assembly of the 50S subunit. The protein is Large ribosomal subunit protein uL3 of Glaesserella parasuis serovar 5 (strain SH0165) (Haemophilus parasuis).